We begin with the raw amino-acid sequence, 263 residues long: Putative hydro-lyase BPUM_0381 (263 aa).

Belongs to the D-glutamate cyclase family.

This chain is Putative hydro-lyase BPUM_0381, found in Bacillus pumilus (strain SAFR-032).